Here is a 176-residue protein sequence, read N- to C-terminus: Large ribosomal subunit protein uL10 (176 aa).

Belongs to the universal ribosomal protein uL10 family. As to quaternary structure, part of the ribosomal stalk of the 50S ribosomal subunit. The N-terminus interacts with L11 and the large rRNA to form the base of the stalk. The C-terminus forms an elongated spine to which L12 dimers bind in a sequential fashion forming a multimeric L10(L12)X complex.

Forms part of the ribosomal stalk, playing a central role in the interaction of the ribosome with GTP-bound translation factors. This is Large ribosomal subunit protein uL10 (rplJ) from Streptomyces coelicolor (strain ATCC BAA-471 / A3(2) / M145).